We begin with the raw amino-acid sequence, 301 residues long: Ribosomal protein L11 methyltransferase (301 aa).

S-adenosyl-L-methionine is bound by residues threonine 130, glycine 151, aspartate 172, and asparagine 239.

It belongs to the methyltransferase superfamily. PrmA family.

Its subcellular location is the cytoplasm. It carries out the reaction L-lysyl-[protein] + 3 S-adenosyl-L-methionine = N(6),N(6),N(6)-trimethyl-L-lysyl-[protein] + 3 S-adenosyl-L-homocysteine + 3 H(+). Its function is as follows. Methylates ribosomal protein L11. The sequence is that of Ribosomal protein L11 methyltransferase from Campylobacter hominis (strain ATCC BAA-381 / DSM 21671 / CCUG 45161 / LMG 19568 / NCTC 13146 / CH001A).